A 131-amino-acid polypeptide reads, in one-letter code: Global transcriptional regulator Spx 1 (131 aa).

An intrachain disulfide couples Cys-10 to Cys-13.

The protein belongs to the ArsC family. Spx subfamily. As to quaternary structure, interacts with the C-terminal domain of the alpha subunit of the RNAP.

The protein resides in the cytoplasm. In terms of biological role, global transcriptional regulator that plays a key role in stress response and exerts either positive or negative regulation of genes. Acts by interacting with the C-terminal domain of the alpha subunit of the RNA polymerase (RNAP). This interaction can enhance binding of RNAP to the promoter region of target genes and stimulate their transcription, or block interaction of RNAP with activator. The chain is Global transcriptional regulator Spx 1 from Oceanobacillus iheyensis (strain DSM 14371 / CIP 107618 / JCM 11309 / KCTC 3954 / HTE831).